We begin with the raw amino-acid sequence, 175 residues long: Beta-carotene hydroxylase (175 aa).

One can recognise a Fatty acid hydroxylase domain in the interval 11-136 (FVTVIGMEVI…RGKEGCVSFG (126 aa)).

The protein belongs to the sterol desaturase family.

It carries out the reaction all-trans-beta-carotene + 4 reduced [2Fe-2S]-[ferredoxin] + 2 O2 + 4 H(+) = all-trans-zeaxanthin + 4 oxidized [2Fe-2S]-[ferredoxin] + 2 H2O. Its pathway is carotenoid biosynthesis; zeaxanthin biosynthesis. In terms of biological role, catalyzes the hydroxylation reaction from beta-carotene to zeaxanthin. The sequence is that of Beta-carotene hydroxylase (crtZ) from Pantoea ananas (Erwinia uredovora).